The following is a 700-amino-acid chain: Small ribosomal subunit protein uS3c (700 aa).

2 insert regions span residues 88–196 (NCHM…LGKF) and 282–587 (KPCT…FQTR).

The protein belongs to the universal ribosomal protein uS3 family. As to quaternary structure, part of the 30S ribosomal subunit.

It localises to the plastid. The protein localises to the chloroplast. The protein is Small ribosomal subunit protein uS3c (rps3) of Tetradesmus obliquus (Green alga).